A 63-amino-acid polypeptide reads, in one-letter code: Alpha-toxin CsE5 (63 aa).

Residues 2–61 (KDGYPVDSGNCKYECLKDDYCNDLCLERKADKGYCYWGKVSCYCYGLPDNSPTKTSGKCN) enclose the LCN-type CS-alpha/beta domain. Cystine bridges form between Cys12/Cys60, Cys16/Cys36, Cys22/Cys43, and Cys26/Cys45.

It belongs to the long (4 C-C) scorpion toxin superfamily. Sodium channel inhibitor family. Alpha subfamily. As to expression, expressed by the venom gland.

Its subcellular location is the secreted. In terms of biological role, alpha toxins bind voltage-independently at site-3 of sodium channels (Nav) and inhibit the inactivation of the activated channels, thereby blocking neuronal transmission. The protein is Alpha-toxin CsE5 of Centruroides sculpturatus (Arizona bark scorpion).